The primary structure comprises 287 residues: 4-diphosphocytidyl-2-C-methyl-D-erythritol kinase (287 aa).

K14 is an active-site residue. ATP is bound at residue 96–106 (PWGAGLGGGSS). D138 is an active-site residue.

It belongs to the GHMP kinase family. IspE subfamily.

It catalyses the reaction 4-CDP-2-C-methyl-D-erythritol + ATP = 4-CDP-2-C-methyl-D-erythritol 2-phosphate + ADP + H(+). Its pathway is isoprenoid biosynthesis; isopentenyl diphosphate biosynthesis via DXP pathway; isopentenyl diphosphate from 1-deoxy-D-xylulose 5-phosphate: step 3/6. Functionally, catalyzes the phosphorylation of the position 2 hydroxy group of 4-diphosphocytidyl-2C-methyl-D-erythritol. This Methylibium petroleiphilum (strain ATCC BAA-1232 / LMG 22953 / PM1) protein is 4-diphosphocytidyl-2-C-methyl-D-erythritol kinase.